The chain runs to 335 residues: Glyceraldehyde-3-phosphate dehydrogenase (335 aa).

Residues 13 to 14 and Gly-111 each bind NAD(+); that span reads TI. Residue 140–142 coordinates D-glyceraldehyde 3-phosphate; sequence SCN. Catalysis depends on Cys-141, which acts as the Nucleophile. Arg-169 serves as a coordination point for NAD(+). Residues Thr-171 and 195 to 196 each bind D-glyceraldehyde 3-phosphate; that span reads HG. Residue Gln-300 coordinates NAD(+).

It belongs to the glyceraldehyde-3-phosphate dehydrogenase family. As to quaternary structure, homotetramer.

Its subcellular location is the cytoplasm. It catalyses the reaction D-glyceraldehyde 3-phosphate + phosphate + NADP(+) = (2R)-3-phospho-glyceroyl phosphate + NADPH + H(+). It carries out the reaction D-glyceraldehyde 3-phosphate + phosphate + NAD(+) = (2R)-3-phospho-glyceroyl phosphate + NADH + H(+). It participates in carbohydrate degradation; glycolysis; pyruvate from D-glyceraldehyde 3-phosphate: step 1/5. This Methanosarcina mazei (strain ATCC BAA-159 / DSM 3647 / Goe1 / Go1 / JCM 11833 / OCM 88) (Methanosarcina frisia) protein is Glyceraldehyde-3-phosphate dehydrogenase.